A 374-amino-acid polypeptide reads, in one-letter code: Translocating chain-associated membrane protein 1 (374 aa).

The Cytoplasmic portion of the chain corresponds to 1 to 29 (MAIRKKSNKNPPLLSHEFLLQNHADIVSC). A helical transmembrane segment spans residues 30 to 50 (LAMLFLLGLMFEVTAKGAIIF). Residues 51–76 (VALQYNVTRPATEEQATESASLYHYG) lie on the Lumenal side of the membrane. Asn-56 carries N-linked (GlcNAc...) asparagine glycosylation. A helical transmembrane segment spans residues 77-97 (IKDLATVLFYMLVAIIIHAII). Topologically, residues 98-121 (QEYVLDKINRRMHFSKTKHSKFNE) are cytoplasmic. One can recognise a TLC domain in the interval 117–326 (SKFNESGQLS…NFQLRRWREH (210 aa)). The chain crosses the membrane as a helical span at residues 122 to 142 (SGQLSAFYLFACVWGTFILIS). At 143-159 (ENYISDPTILWRAYPHN) the chain is on the lumenal side. Residues 160-180 (LMTFQTKFFYISQLAYWLHAF) traverse the membrane as a helical segment. The Cytoplasmic portion of the chain corresponds to 181-192 (PELYFQKTKKED). The chain crosses the membrane as a helical span at residues 193 to 213 (IPRQLVYIGLYLFHIAGAYLL). The Lumenal segment spans residues 214–217 (NLNH). Residues 218–238 (LGLVLLVLHYFVEFLFHISRL) traverse the membrane as a helical segment. Over 239 to 251 (FYFSDEKYQKGFS) the chain is Cytoplasmic. Residues 252–272 (LWAVLFVLGRLLTLILSVLTV) form a helical membrane-spanning segment. Over 273-297 (GFGLARAENQKLDFSTGNFNVLAVR) the chain is Lumenal. Residues 298–318 (IAVLASICITQAFMMWKFINF) traverse the membrane as a helical segment. Over 319–374 (QLRRWREHSAFQAPPVKRKPAVTKGRSSRKGTENGVNGTVTSNGADSPRNRKEKSS) the chain is Cytoplasmic. The disordered stretch occupies residues 333-374 (PVKRKPAVTKGRSSRKGTENGVNGTVTSNGADSPRNRKEKSS). The segment covering 334–347 (VKRKPAVTKGRSSR) has biased composition (basic residues). Polar residues predominate over residues 352–363 (NGVNGTVTSNGA). Ser-365 carries the post-translational modification Phosphoserine.

Belongs to the TRAM family. As to quaternary structure, interacts with SEC61B. May interact with Derlin-1/DERL1. Post-translationally, N-glycosylated.

The protein resides in the endoplasmic reticulum membrane. Involved in the translocation of nascent protein chains into or through the endoplasmic reticulum (ER) membrane by facilitating the proper chain positioning at the SEC61 channel. Regulates the exposure of nascent secretory protein chain to the cytosol during translocation into the ER. May affect the phospholipid bilayer in the vicinity of the lateral gate of the SEC61 channel, thereby facilitating ER protein transport. Intimately associates with transmembrane (TM) domain of nascent membrane proteins during the entire integration process into the ER membrane. Associates with the second TM domain of G-protein-coupled receptor opsin/OPSD nascent chain in the ER membrane, which may facilitate its integration into the membrane. Under conditions of ER stress, participates in the disposal of misfolded ER membrane proteins during the unfolded protein response (UPR), an integrated stress response (ISR) pathway, by selectively retrotranslocating misfolded ER-membrane proteins from the ER into the cytosol where they are ubiquitinated and degraded by the proteasome. The chain is Translocating chain-associated membrane protein 1 from Mus musculus (Mouse).